The following is a 1445-amino-acid chain: Netrin receptor DCC (1445 aa).

The first 25 residues, 1-25 (MENSLGCVWVPKLAFVLFGASLLSA), serve as a signal peptide directing secretion. Ig-like C2-type domains are found at residues 26-135 (HLQV…AKVM), 139-229 (PLRF…AEVR), 234-326 (PGLH…AELT), and 331-416 (PWFL…AQLI). N-linked (GlcNAc...) asparagine glycosylation is found at asparagine 60 and asparagine 94. Disulfide bonds link cysteine 61–cysteine 117, cysteine 161–cysteine 212, and cysteine 261–cysteine 310. 2 N-linked (GlcNAc...) asparagine glycosylation sites follow: asparagine 299 and asparagine 318. Cysteine 352 and cysteine 400 are oxidised to a cystine. 6 Fibronectin type-III domains span residues 431 to 524 (APRD…TQPE), 530 to 620 (PVEN…TLSD), 625 to 718 (PPQN…TPEN), 728 to 821 (QPSS…TDPT), 846 to 942 (PPVG…TYEA), and 947 to 1044 (APKD…TLKV). Residue asparagine 478 is glycosylated (N-linked (GlcNAc...) asparagine). N-linked (GlcNAc...) asparagine glycans are attached at residues asparagine 628 and asparagine 702. A helical transmembrane segment spans residues 1100–1120 (VITVVTVGVLTVLVVVIVAVI). 2 disordered regions span residues 1126 to 1152 (SAQQ…RPPD) and 1167 to 1220 (KPAG…MSTL). The span at 1129 to 1143 (QRKKRATHSASKRKG) shows a compositional bias: basic residues. Serine 1178 is modified (phosphoserine; by MAPK1). The span at 1179 to 1220 (PIQSCQDLTPVSHSQSESQMGSKSASHSGQDTEEAGSSMSTL) shows a compositional bias: polar residues. Residue threonine 1187 is modified to Phosphothreonine; by MAPK1. At serine 1267 the chain carries Phosphoserine; by MAPK1. Disordered stretches follow at residues 1292-1327 (GFGA…APSR) and 1392-1417 (LLPV…PASV).

Belongs to the immunoglobulin superfamily. DCC family. As to quaternary structure, interacts with the cytoplasmic part of UNC5A, UNC5B and UNC5C. Interacts with DSCAM. Interacts with PTK2/FAK1. Interacts with MYO10. Interacts with MAPK1. Interacts with NTN1. Interacts with CBLN4; this interaction can be competed by NTN1. Interacts with SIAH1 and SIAH2. Post-translationally, ubiquitinated; mediated by SIAH1 or SIAH2 and leading to its subsequent proteasomal degradation. In terms of tissue distribution, detected in embryonic spinal cord, predominantly in axons of commissural neurons (at protein level). Detected in embryonic spinal cord.

The protein localises to the membrane. Its function is as follows. Receptor for netrin required for axon guidance. Mediates axon attraction of neuronal growth cones in the developing nervous system upon ligand binding. Its association with UNC5 proteins may trigger signaling for axon repulsion. It also acts as a dependence receptor required for apoptosis induction when not associated with netrin ligand. Implicated as a tumor suppressor gene. The protein is Netrin receptor DCC (Dcc) of Rattus norvegicus (Rat).